Reading from the N-terminus, the 160-residue chain is SsrA-binding protein (160 aa).

Residues 131-160 (KKEYDKRDTERERDAGRELQRAVRNKGKED) are disordered.

This sequence belongs to the SmpB family.

It is found in the cytoplasm. Its function is as follows. Required for rescue of stalled ribosomes mediated by trans-translation. Binds to transfer-messenger RNA (tmRNA), required for stable association of tmRNA with ribosomes. tmRNA and SmpB together mimic tRNA shape, replacing the anticodon stem-loop with SmpB. tmRNA is encoded by the ssrA gene; the 2 termini fold to resemble tRNA(Ala) and it encodes a 'tag peptide', a short internal open reading frame. During trans-translation Ala-aminoacylated tmRNA acts like a tRNA, entering the A-site of stalled ribosomes, displacing the stalled mRNA. The ribosome then switches to translate the ORF on the tmRNA; the nascent peptide is terminated with the 'tag peptide' encoded by the tmRNA and targeted for degradation. The ribosome is freed to recommence translation, which seems to be the essential function of trans-translation. This Pseudomonas fluorescens (strain Pf0-1) protein is SsrA-binding protein.